A 240-amino-acid chain; its full sequence is Ubiquinone biosynthesis O-methyltransferase (240 aa).

Residues R44, G64, D85, and M129 each coordinate S-adenosyl-L-methionine.

It belongs to the methyltransferase superfamily. UbiG/COQ3 family.

It catalyses the reaction a 3-demethylubiquinol + S-adenosyl-L-methionine = a ubiquinol + S-adenosyl-L-homocysteine + H(+). The enzyme catalyses a 3-(all-trans-polyprenyl)benzene-1,2-diol + S-adenosyl-L-methionine = a 2-methoxy-6-(all-trans-polyprenyl)phenol + S-adenosyl-L-homocysteine + H(+). It functions in the pathway cofactor biosynthesis; ubiquinone biosynthesis. In terms of biological role, O-methyltransferase that catalyzes the 2 O-methylation steps in the ubiquinone biosynthetic pathway. The polypeptide is Ubiquinone biosynthesis O-methyltransferase (Escherichia coli (strain SMS-3-5 / SECEC)).